The primary structure comprises 797 residues: Short transient receptor potential channel 4-associated protein (797 aa).

Ala-2 bears the N-acetylalanine mark. An interaction with TNFRSF1A region spans residues 2–400 (AAAPAAAGAG…VLYVLCVLLM (399 aa)).

Component of the DCX(TRPC4AP) E3 ubiquitin ligase complex, at least composed of CUL4A, DDB1, TRPC4AP/TRUSS and RBX1. Interacts with MYC. Constitutively associated with TNFRSF1A. Directly interacts with TRADD, TRAF2, CHUK, IKBKB and IKBKG. Interacts with TRPC1, TRPC4 and TRPC5. Phosphorylated by GSK3B; phosphorylation is required for ubiquitination. In terms of processing, ubiquitinated by a SCF (SKP1-CUL1-F-box protein) E3 ubiquitin-protein ligase containing SKP2, leading to its degradation. Phosphorylation by GSK3B is required for ubiquitination. As to expression, widely expressed, with high levels in heart, liver and testis.

It is found in the cytoplasm. The protein localises to the perinuclear region. Its pathway is protein modification; protein ubiquitination. In terms of biological role, substrate-recognition component of a DCX (DDB1-CUL4-X-box) E3 ubiquitin-protein ligase complex required for cell cycle control. The DCX(TRPC4AP) complex specifically mediates the polyubiquitination and subsequent degradation of MYC as part of the DesCEND (destruction via C-end degrons) pathway. The DesCEND (destruction via C-end degrons) pathway recognizes a C-degron located at the extreme C terminus of target proteins, leading to their ubiquitination and degradation. The DCX(TRPC4AP) complex specifically recognizes proteins with an arginine at the minus 3 position (R-3 motif) at the C-terminus, such as MYC, leading to their ubiquitination and degradation. Also participates in the activation of NFKB1 in response to ligation of TNFRSF1A, possibly by linking TNFRSF1A to the IKK signalosome. Involved in JNK activation via its interaction with TRAF2. Also involved in elevation of endoplasmic reticulum Ca(2+) storage reduction in response to CHRM1. This is Short transient receptor potential channel 4-associated protein from Mus musculus (Mouse).